The following is a 369-amino-acid chain: Glycolate oxidase (369 aa).

At Met1 the chain carries N-acetylmethionine. In terms of domain architecture, FMN hydroxy acid dehydrogenase spans 1–359; it reads MEITNVNEYE…SRSHIAADWD (359 aa). Tyr24 contributes to the glyoxylate binding site. FMN contacts are provided by residues 77–79, Ser106, 127–129, and Thr155; these read PTA and QLY. Tyr129 lines the glyoxylate pocket. Arg164 is a glyoxylate binding site. FMN contacts are provided by Lys230 and Ser252. Glyoxylate is bound by residues His254 and Arg257. His254 acts as the Proton acceptor in catalysis. Residues 285–289 and 308–309 each bind FMN; these read DGGVR and GR. A Microbody targeting signal motif is present at residues 367 to 369; sequence ARL.

The protein belongs to the FMN-dependent alpha-hydroxy acid dehydrogenase family. As to quaternary structure, homotetramer. FMN serves as cofactor.

The protein resides in the peroxisome. It carries out the reaction glycolate + O2 = glyoxylate + H2O2. It catalyses the reaction a (2S)-2-hydroxycarboxylate + O2 = a 2-oxocarboxylate + H2O2. The protein operates within photosynthesis; photorespiration; glycine from 2-phosphoglycolate: step 2/3. Functionally, catalyzes the oxidation of glycolate to glyoxylate, with a reduction of O2 to H2O2. Is a key enzyme in photorespiration in green plants. To a lesser extent, is also able to use L-lactate and 2-hydroxbyutanoate as substrate in vitro, but shows almost no activity with L-mandelate. This chain is Glycolate oxidase, found in Spinacia oleracea (Spinach).